The following is a 247-amino-acid chain: Adenosylcobinamide-GDP ribazoletransferase (247 aa).

Transmembrane regions (helical) follow at residues 31–51, 55–75, 109–129, 135–155, 183–203, and 227–247; these read ILFY…VTCI, LPAL…TGGL, IGVL…YVLI, LFLI…FLTT, VLLL…SFLI, and AIEI…FYLV.

The protein belongs to the CobS family. It depends on Mg(2+) as a cofactor.

It is found in the cell inner membrane. It carries out the reaction alpha-ribazole + adenosylcob(III)inamide-GDP = adenosylcob(III)alamin + GMP + H(+). It catalyses the reaction alpha-ribazole 5'-phosphate + adenosylcob(III)inamide-GDP = adenosylcob(III)alamin 5'-phosphate + GMP + H(+). It functions in the pathway cofactor biosynthesis; adenosylcobalamin biosynthesis; adenosylcobalamin from cob(II)yrinate a,c-diamide: step 7/7. Joins adenosylcobinamide-GDP and alpha-ribazole to generate adenosylcobalamin (Ado-cobalamin). Also synthesizes adenosylcobalamin 5'-phosphate from adenosylcobinamide-GDP and alpha-ribazole 5'-phosphate. This is Adenosylcobinamide-GDP ribazoletransferase from Acinetobacter baumannii (strain ACICU).